Here is a 465-residue protein sequence, read N- to C-terminus: Mitochondrial distribution and morphology protein 10 (465 aa).

Belongs to the MDM10 family. In terms of assembly, component of the ER-mitochondria encounter structure (ERMES) or MDM complex, composed of MMM1, MDM10, MDM12 and MDM34. Associates with the mitochondrial outer membrane sorting assembly machinery SAM(core) complex.

The protein localises to the mitochondrion outer membrane. Functionally, component of the ERMES/MDM complex, which serves as a molecular tether to connect the endoplasmic reticulum and mitochondria. Components of this complex are involved in the control of mitochondrial shape and protein biogenesis and may function in phospholipid exchange. MDM10 is involved in the late assembly steps of the general translocase of the mitochondrial outer membrane (TOM complex). Functions in the TOM40-specific route of the assembly of outer membrane beta-barrel proteins, including the association of TOM40 with the receptor TOM22 and small TOM proteins. Can associate with the SAM(core) complex as well as the MDM12-MMM1 complex, both involved in late steps of the major beta-barrel assembly pathway, that is responsible for biogenesis of all outer membrane beta-barrel proteins. May act as a switch that shuttles between both complexes and channels precursor proteins into the TOM40-specific pathway. Plays a role in mitochondrial morphology and in the inheritance of mitochondria. The protein is Mitochondrial distribution and morphology protein 10 of Eremothecium gossypii (strain ATCC 10895 / CBS 109.51 / FGSC 9923 / NRRL Y-1056) (Yeast).